We begin with the raw amino-acid sequence, 409 residues long: 1-deoxy-D-xylulose 5-phosphate reductoisomerase (409 aa).

Residues threonine 10, glycine 11, serine 12, isoleucine 13, glycine 36, arginine 37, asparagine 38, and asparagine 126 each coordinate NADPH. Lysine 127 serves as a coordination point for 1-deoxy-D-xylulose 5-phosphate. An NADPH-binding site is contributed by glutamate 128. Residue aspartate 152 coordinates Mn(2+). Positions 153, 154, 190, and 213 each coordinate 1-deoxy-D-xylulose 5-phosphate. Position 154 (glutamate 154) interacts with Mn(2+). Glycine 219 provides a ligand contact to NADPH. 1-deoxy-D-xylulose 5-phosphate is bound by residues serine 226, asparagine 231, lysine 232, and glutamate 235. Glutamate 235 contacts Mn(2+).

Belongs to the DXR family. Mg(2+) serves as cofactor. It depends on Mn(2+) as a cofactor.

It catalyses the reaction 2-C-methyl-D-erythritol 4-phosphate + NADP(+) = 1-deoxy-D-xylulose 5-phosphate + NADPH + H(+). The protein operates within isoprenoid biosynthesis; isopentenyl diphosphate biosynthesis via DXP pathway; isopentenyl diphosphate from 1-deoxy-D-xylulose 5-phosphate: step 1/6. Catalyzes the NADPH-dependent rearrangement and reduction of 1-deoxy-D-xylulose-5-phosphate (DXP) to 2-C-methyl-D-erythritol 4-phosphate (MEP). This chain is 1-deoxy-D-xylulose 5-phosphate reductoisomerase, found in Prochlorococcus marinus (strain MIT 9515).